We begin with the raw amino-acid sequence, 149 residues long: METQRASLCLGRWSLWLLLLGLVVPSASAQALSYREAVLRAVDRLNEQSSEANLYRLLELDQPPKADEDPGTPKPVSFTVKETVCPRPTRQPPELCDFKENGRVKQCVGTVTLDQIKDPLDITCNEVQGVRGGRLCYCRPRFCVCVGRG.

Positions 1–29 are cleaved as a signal peptide; the sequence is METQRASLCLGRWSLWLLLLGLVVPSASA. Residues 30 to 130 constitute a propeptide that is removed on maturation; it reads QALSYREAVL…DITCNEVQGV (101 aa). Residues 61 to 80 form a disordered region; it reads DQPPKADEDPGTPKPVSFTV. 4 cysteine pairs are disulfide-bonded: Cys85–Cys96, Cys107–Cys124, Cys136–Cys145, and Cys138–Cys143. An Arginine amide modification is found at Arg148.

The protein belongs to the cathelicidin family.

The protein resides in the secreted. Functionally, microbicidal activity. In Sus scrofa (Pig), this protein is Protegrin-5 (NPG5).